Consider the following 330-residue polypeptide: Aspartate--ammonia ligase (330 aa).

The protein belongs to the class-II aminoacyl-tRNA synthetase family. AsnA subfamily.

It localises to the cytoplasm. The enzyme catalyses L-aspartate + NH4(+) + ATP = L-asparagine + AMP + diphosphate + H(+). It participates in amino-acid biosynthesis; L-asparagine biosynthesis; L-asparagine from L-aspartate (ammonia route): step 1/1. This is Aspartate--ammonia ligase from Pectobacterium carotovorum subsp. carotovorum (strain PC1).